A 144-amino-acid polypeptide reads, in one-letter code: Large ribosomal subunit protein uL15 (144 aa).

Residues 1-53 (MRLNSLSPAEGAKHSAKRLGRGIGSGLGKTGGRGHKGQKSRTGGGVRRGFEGG) are disordered. Positions 21–31 (RGIGSGLGKTG) are enriched in gly residues.

The protein belongs to the universal ribosomal protein uL15 family. In terms of assembly, part of the 50S ribosomal subunit.

Its function is as follows. Binds to the 23S rRNA. This chain is Large ribosomal subunit protein uL15, found in Glaesserella parasuis serovar 5 (strain SH0165) (Haemophilus parasuis).